A 218-amino-acid chain; its full sequence is DNA replication complex GINS protein psf3 (218 aa).

The segment covering 147–163 (GGGSSYHGRDGGGAGGK) has biased composition (gly residues). The disordered stretch occupies residues 147-182 (GGGSSYHGRDGGGAGGKGKGKATKDDNASNLGVGGA).

The protein belongs to the GINS3/PSF3 family. In terms of assembly, component of the GINS complex which is a heterotetramer of div-26/sld5, drc-1/psf1, drc-2/psf2 and drc-3/psf3.

It is found in the nucleus. The GINS complex plays an essential role in the initiation of DNA replication. This is DNA replication complex GINS protein psf3 (drc-3) from Neurospora crassa (strain ATCC 24698 / 74-OR23-1A / CBS 708.71 / DSM 1257 / FGSC 987).